The following is a 492-amino-acid chain: WD repeat-containing protein JIP5 (492 aa).

5 WD repeats span residues 127-166, 178-217, 236-274, 276-317, and 365-405; these read RHKG…VVKK, KKND…LSNS, RSAY…ILIS, DQED…LEDQ, and RNHS…VEEN. 2 stretches are compositionally biased toward acidic residues: residues 404-414 and 422-433; these read ENASVESDSDE and DLSDDTSSDDET. Residues 404–472 are disordered; that stretch reads ENASVESDSD…SKSVKKRKIM (69 aa). Residues 449–462 show a composition bias toward basic and acidic residues; the sequence is KDLKEDHQEEKESN.

As to quaternary structure, interacts with BUD27 and GIS1.

The protein resides in the nucleus. It is found in the nucleolus. In Saccharomyces cerevisiae (strain ATCC 204508 / S288c) (Baker's yeast), this protein is WD repeat-containing protein JIP5 (JIP5).